Here is a 481-residue protein sequence, read N- to C-terminus: Arylsulfatase (481 aa).

3 residues coordinate Ca(2+): aspartate 11, glutamine 12, and cysteine 51. Cysteine 51 functions as the Nucleophile in the catalytic mechanism. Position 51 is a 3-oxoalanine (Cys) (cysteine 51). Histidine 102 is an active-site residue. 2 residues coordinate Ca(2+): aspartate 302 and histidine 303.

Belongs to the sulfatase family. Ca(2+) is required as a cofactor. Post-translationally, the conversion to 3-oxoalanine (also known as C-formylglycine, FGly), of a serine or cysteine residue in prokaryotes and of a cysteine residue in eukaryotes, is critical for catalytic activity.

It catalyses the reaction an aryl sulfate + H2O = a phenol + sulfate + H(+). Functionally, has sulfatase activity toward para-nitrophenyl sulfate, which is increased in presence of calcium ion. The sequence is that of Arylsulfatase from Clostridium perfringens (strain 13 / Type A).